The sequence spans 24 residues: Retinol-binding protein 3 (24 aa).

It localises to the secreted. The protein localises to the extracellular space. Its subcellular location is the extracellular matrix. The protein resides in the interphotoreceptor matrix. Its function is as follows. IRBP shuttles 11-cis and all trans retinoids between the retinol isomerase in the pigment epithelium and the visual pigments in the photoreceptor cells of the retina. This chain is Retinol-binding protein 3 (RBP3), found in Ovis aries (Sheep).